Here is a 101-residue protein sequence, read N- to C-terminus: Large ribosomal subunit protein uL24 (101 aa).

It belongs to the universal ribosomal protein uL24 family. In terms of assembly, part of the 50S ribosomal subunit.

In terms of biological role, one of two assembly initiator proteins, it binds directly to the 5'-end of the 23S rRNA, where it nucleates assembly of the 50S subunit. One of the proteins that surrounds the polypeptide exit tunnel on the outside of the subunit. In Jannaschia sp. (strain CCS1), this protein is Large ribosomal subunit protein uL24.